Here is a 430-residue protein sequence, read N- to C-terminus: Trigger factor (430 aa).

The PPIase FKBP-type domain maps to 163 to 248 (GNIAIIDFKG…IKDIKVKELP (86 aa)).

This sequence belongs to the FKBP-type PPIase family. Tig subfamily.

The protein resides in the cytoplasm. It catalyses the reaction [protein]-peptidylproline (omega=180) = [protein]-peptidylproline (omega=0). Its function is as follows. Involved in protein export. Acts as a chaperone by maintaining the newly synthesized protein in an open conformation. Functions as a peptidyl-prolyl cis-trans isomerase. The polypeptide is Trigger factor (Clostridium botulinum (strain Okra / Type B1)).